A 31-amino-acid polypeptide reads, in one-letter code: MEALVYTFLLISTLGIIFFGIFFREPPRIVK.

A helical transmembrane segment spans residues 3-23 (ALVYTFLLISTLGIIFFGIFF).

Belongs to the PsbT family. PSII is composed of 1 copy each of membrane proteins PsbA, PsbB, PsbC, PsbD, PsbE, PsbF, PsbH, PsbI, PsbJ, PsbK, PsbL, PsbM, PsbT, PsbY, PsbZ, Psb30/Ycf12, at least 3 peripheral proteins of the oxygen-evolving complex and a large number of cofactors. It forms dimeric complexes.

The protein resides in the plastid. It is found in the chloroplast thylakoid membrane. In terms of biological role, found at the monomer-monomer interface of the photosystem II (PS II) dimer, plays a role in assembly and dimerization of PSII. PSII is a light-driven water plastoquinone oxidoreductase, using light energy to abstract electrons from H(2)O, generating a proton gradient subsequently used for ATP formation. The polypeptide is Photosystem II reaction center protein T (Nephroselmis olivacea (Green alga)).